The primary structure comprises 176 residues: Ribosome rescue factor SmrB (176 aa).

The Smr domain maps to 97–172 (LDMHGMTQQE…GNGALLVLID (76 aa)).

This sequence belongs to the SmrB family. In terms of assembly, associates with collided ribosomes, but not with correctly translating polysomes.

Functionally, acts as a ribosome collision sensor. Detects stalled/collided disomes (pairs of ribosomes where the leading ribosome is stalled and a second ribosome has collided with it) and endonucleolytically cleaves mRNA at the 5' boundary of the stalled ribosome. Stalled/collided disomes form a new interface (primarily via the 30S subunits) that binds SmrB. Cleaved mRNA becomes available for tmRNA ligation, leading to ribosomal subunit dissociation and rescue of stalled ribosomes. This is Ribosome rescue factor SmrB from Photobacterium profundum (strain SS9).